A 505-amino-acid polypeptide reads, in one-letter code: ATP synthase subunit beta (505 aa).

Position 157-164 (157-164 (GGAGVGKT)) interacts with ATP.

Belongs to the ATPase alpha/beta chains family. F-type ATPases have 2 components, CF(1) - the catalytic core - and CF(0) - the membrane proton channel. CF(1) has five subunits: alpha(3), beta(3), gamma(1), delta(1), epsilon(1). CF(0) has three main subunits: a(1), b(2) and c(9-12). The alpha and beta chains form an alternating ring which encloses part of the gamma chain. CF(1) is attached to CF(0) by a central stalk formed by the gamma and epsilon chains, while a peripheral stalk is formed by the delta and b chains.

It is found in the cell inner membrane. It catalyses the reaction ATP + H2O + 4 H(+)(in) = ADP + phosphate + 5 H(+)(out). Produces ATP from ADP in the presence of a proton gradient across the membrane. The catalytic sites are hosted primarily by the beta subunits. The protein is ATP synthase subunit beta of Bacteroides thetaiotaomicron (strain ATCC 29148 / DSM 2079 / JCM 5827 / CCUG 10774 / NCTC 10582 / VPI-5482 / E50).